The primary structure comprises 204 residues: Cytochrome bo(3) ubiquinol oxidase subunit 3 (204 aa).

At 1-31 (MATDTLTHATAHAHEHGHHDAGGTKIFGFWI) the chain is on the cytoplasmic side. A helical transmembrane segment spans residues 32–50 (YLMSDCILFSILFATYAVL). The Periplasmic segment spans residues 51–66 (VNGTAGGPTGKDIFEL). Residues 67–85 (PFVLVETFLLLFSSITYGM) form a helical membrane-spanning segment. The Cytoplasmic segment spans residues 86–101 (AAIAMYKNNKSQVISW). A helical transmembrane segment spans residues 102–120 (LALTWLFGAGFIGMEIYEF). Topologically, residues 121–142 (HHLIVNGMGPDRSGFLSAFFAL) are periplasmic. Residues 143-161 (VGTHGLHVTSGLIWMAVLM) traverse the membrane as a helical segment. Over 162-184 (VQIARRGLTSTNRTRIMCLSLFW) the chain is Cytoplasmic. The helical transmembrane segment at 185–203 (HFLDVVWICVFTVVYLMGA) threads the bilayer. Residue M204 is a topological domain, periplasmic.

Belongs to the cytochrome c oxidase subunit 3 family. As to quaternary structure, heterooctamer of two A chains, two B chains, two C chains and two D chains.

It localises to the cell inner membrane. Cytochrome bo(3) ubiquinol terminal oxidase is the component of the aerobic respiratory chain of E.coli that predominates when cells are grown at high aeration. Has proton pump activity across the membrane in addition to electron transfer, pumping 2 protons/electron. The protein is Cytochrome bo(3) ubiquinol oxidase subunit 3 (cyoC) of Escherichia coli O6:H1 (strain CFT073 / ATCC 700928 / UPEC).